Consider the following 142-residue polypeptide: Holo-[acyl-carrier-protein] synthase (142 aa).

Positions 8 and 57 each coordinate Mg(2+).

It belongs to the P-Pant transferase superfamily. AcpS family. Mg(2+) is required as a cofactor.

The protein resides in the cytoplasm. The catalysed reaction is apo-[ACP] + CoA = holo-[ACP] + adenosine 3',5'-bisphosphate + H(+). Its function is as follows. Transfers the 4'-phosphopantetheine moiety from coenzyme A to a Ser of acyl-carrier-protein. In Maricaulis maris (strain MCS10) (Caulobacter maris), this protein is Holo-[acyl-carrier-protein] synthase.